The sequence spans 585 residues: Protein FAM83D (585 aa).

The segment at 1 to 296 (MAARFELLDD…LYAQSEPISS (296 aa)) is DUF1669. Phosphoserine is present on S295. Disordered stretches follow at residues 334–411 (LSST…TSSS) and 425–482 (AASS…SQGS). The required for interaction with KIF22 and function in chromosome congression stretch occupies residues 337 to 585 (TPRKSNLGPE…RDIALYPPYQ (249 aa)). Composition is skewed to basic and acidic residues over residues 347-360 (EPPK…RPDS) and 369-383 (DYFH…DSKV). Residues 425–441 (AASSQATVWSKSTTTQT) show a composition bias toward polar residues. S458 bears the Phosphoserine mark. Residues 458-482 (SPASKMSVSRSSSVRSSSSVSSQGS) are compositionally biased toward low complexity. Phosphothreonine is present on T511.

Belongs to the FAM83 family. Interacts with FBXW7; promotes FBXW7 degradation. May interact with RAF1. Interacts with KIF22; recruits KIF22 to mitotic spindle microtubules. Interacts (via C-terminus) with DYNLL1. Interacts with HMMR. Directly interacts (via DUF1669) with CSNK1A1 and CSNK1A1L. Phosphorylated during mitosis.

Its subcellular location is the cytoplasm. The protein localises to the cytoskeleton. It localises to the spindle. The protein resides in the spindle pole. Its function is as follows. Through the degradation of FBXW7, may act indirectly on the expression and downstream signaling of MTOR, JUN and MYC. May play also a role in cell proliferation through activation of the ERK1/ERK2 signaling cascade. May also be important for proper chromosome congression and alignment during mitosis through its interaction with KIF22. The protein is Protein FAM83D of Mus musculus (Mouse).